Here is a 174-residue protein sequence, read N- to C-terminus: Large ribosomal subunit protein uL16 (174 aa).

Belongs to the universal ribosomal protein uL16 family.

In Methanocaldococcus jannaschii (strain ATCC 43067 / DSM 2661 / JAL-1 / JCM 10045 / NBRC 100440) (Methanococcus jannaschii), this protein is Large ribosomal subunit protein uL16.